A 171-amino-acid chain; its full sequence is Putative F-box protein At1g32020 (171 aa).

The region spanning 3–49 (CDRISTLPDHLVAKIVSYLGIKDSIKTSVLSKRWEFVWLKVVGLDLK) is the F-box domain.

In Arabidopsis thaliana (Mouse-ear cress), this protein is Putative F-box protein At1g32020.